The sequence spans 526 residues: UDP-glycosyltransferase UGT5 (526 aa).

Topologically, residues Met-1–Gln-474 are lumenal. Asn-49, Asn-124, and Asn-283 each carry an N-linked (GlcNAc...) asparagine glycan. Residues Tyr-475 to Ile-495 traverse the membrane as a helical segment. The Cytoplasmic portion of the chain corresponds to Tyr-496–Asn-526.

Belongs to the UDP-glycosyltransferase family.

It is found in the microsome membrane. Functionally, catalyzes the transfer of a glycosyl group from a UDP-sugar to an acceptor molecule. The protein is UDP-glycosyltransferase UGT5 of Dactylopius coccus (Cochineal).